Here is a 228-residue protein sequence, read N- to C-terminus: Ribulose-phosphate 3-epimerase (228 aa).

A substrate-binding site is contributed by Ser12. A divalent metal cation is bound by residues His37, Asp39, and His70. The active-site Proton acceptor is the Asp39. Residues His70, 146 to 149 (GFGG), 176 to 178 (DGG), and 198 to 199 (GS) contribute to the substrate site. A divalent metal cation is bound at residue Asp176. The active-site Proton donor is the Asp176.

The protein belongs to the ribulose-phosphate 3-epimerase family. It depends on a divalent metal cation as a cofactor.

It carries out the reaction D-ribulose 5-phosphate = D-xylulose 5-phosphate. The protein operates within carbohydrate degradation. Its function is as follows. Catalyzes the reversible epimerization of D-ribulose 5-phosphate to D-xylulose 5-phosphate. The protein is Ribulose-phosphate 3-epimerase of Rhodobacter capsulatus (Rhodopseudomonas capsulata).